A 432-amino-acid chain; its full sequence is Neuronal pentraxin-2 (432 aa).

The signal sequence occupies residues 1–14 (MLALLTAGVALAVA). Residues N149 and N190 are each glycosylated (N-linked (GlcNAc...) asparagine). One can recognise a Pentraxin (PTX) domain in the interval 224–425 (DAFKVSLPLR…GASKWPVETC (202 aa)). Cysteines 254 and 314 form a disulfide. N278, E356, Q357, D358, and Q368 together coordinate Ca(2+). An N-linked (GlcNAc...) asparagine glycan is attached at N394.

Homooligomer or heterooligomer (probably pentamer) with neuronal pentraxin receptor (NPTXR). Requires Ca(2+) as cofactor.

It is found in the secreted. Its function is as follows. Likely to play role in the modification of cellular properties that underlie long-term plasticity. Binds to agar matrix in a calcium-dependent manner. This chain is Neuronal pentraxin-2 (Nptx2), found in Rattus norvegicus (Rat).